The sequence spans 318 residues: Glutathione synthetase (318 aa).

Residues 125-311 (EKLFTAWFPE…ITGKLMDAIE (187 aa)) enclose the ATP-grasp domain. 151 to 208 (FRQEHGDIILKPLDGMGGASIFRVKENDPNVSVIIETLTNHGQNYAMAQTFVPDISNG) provides a ligand contact to ATP. E282 and N284 together coordinate Mg(2+).

This sequence belongs to the prokaryotic GSH synthase family. Mg(2+) serves as cofactor. It depends on Mn(2+) as a cofactor.

It catalyses the reaction gamma-L-glutamyl-L-cysteine + glycine + ATP = glutathione + ADP + phosphate + H(+). Its pathway is sulfur metabolism; glutathione biosynthesis; glutathione from L-cysteine and L-glutamate: step 2/2. This chain is Glutathione synthetase, found in Vibrio vulnificus (strain YJ016).